Consider the following 87-residue polypeptide: Glutaredoxin 1 (87 aa).

One can recognise a Glutaredoxin domain in the interval 1 to 87 (MFTVIFGRPG…WAKENLNLFA (87 aa)). Cys11 and Cys14 are joined by a disulfide.

Belongs to the glutaredoxin family. Monomer.

Functionally, the disulfide bond functions as an electron carrier in the glutathione-dependent synthesis of deoxyribonucleotides by the enzyme ribonucleotide reductase. In addition, it is also involved in reducing some disulfides in a coupled system with glutathione reductase. The sequence is that of Glutaredoxin 1 (grxA) from Salmonella typhi.